The sequence spans 227 residues: PKHD-type hydroxylase Bpro_3048 (227 aa).

The 102-residue stretch at 78-179 folds into the Fe2OG dioxygenase domain; it reads KIFTPRINRY…RLACFFWVES (102 aa). Fe cation-binding residues include His-97, Asp-99, and His-160. Arg-170 serves as a coordination point for 2-oxoglutarate.

Fe(2+) serves as cofactor. The cofactor is L-ascorbate.

This chain is PKHD-type hydroxylase Bpro_3048, found in Polaromonas sp. (strain JS666 / ATCC BAA-500).